The sequence spans 397 residues: Putative protein FAM47D (397 aa).

It belongs to the FAM47 family.

The protein is Putative protein FAM47D (FAM47DP) of Homo sapiens (Human).